Here is a 614-residue protein sequence, read N- to C-terminus: MSHILSAVAWPYTNGPRHIGHVAGFGVPSDVFSRYMRMAGHDVLMVSGTDEHGTPILVLAEQEGVTPQELTDRYNRVIVDDLANLGLSYDLFTRTTTRNHYAVVQEMFRTVHKNGYMVEQTTMGAISPSTGRTLPDRYIEGTCPICGYDGARGDQCDNCGNQLDAVDLINPRSRINGEKPTFIETQHFFLDLPALADALGAWLRTRTHWRPNVLNFSLNLLDDLRPRAMTRDIDWGIPVPLPGWEDNPAKRLYVWFDAVIGYLSASIEWARRQELAAGGAGTPDAEAWRAWWNPTPGLDQQSYYFMGKDNITFHSQIWPAELLGYAGKGSRGGEPGIYGELNLPTEVVSSEFLTTEGKQFSTSRGVVVYVRDMLARYQPDALRYFIAVAGPESSDSDFTWSEFKRRTNDELVAGWGNLVNRTATMVHKNFGAVPEPGERLAVDEAVLATTRAGFAQVGRLLETQRQRAAVTEAMRVVGEVNKYVSETEPWKLKTDRDRLATVLHTATQAVADCNVLLAPFLPHAAQEIHSALGGTGTLAPQPRVDEVTDLDDASRSYPIITGDYVRGETLAPWESAAVVAGTPIEKPSPVFTKLDDAIVEEELERMRAGAAERA.

The 'HIGH' region signature appears at 11–21 (PYTNGPRHIGH). Cysteine 143, cysteine 146, cysteine 156, and cysteine 159 together coordinate Zn(2+). A 'KMSKS' region motif is present at residues 359–363 (QFSTS). Residue threonine 362 coordinates ATP.

This sequence belongs to the class-I aminoacyl-tRNA synthetase family. MetG type 1 subfamily. As to quaternary structure, monomer. Zn(2+) is required as a cofactor.

It localises to the cytoplasm. It catalyses the reaction tRNA(Met) + L-methionine + ATP = L-methionyl-tRNA(Met) + AMP + diphosphate. In terms of biological role, is required not only for elongation of protein synthesis but also for the initiation of all mRNA translation through initiator tRNA(fMet) aminoacylation. This Beutenbergia cavernae (strain ATCC BAA-8 / DSM 12333 / CCUG 43141 / JCM 11478 / NBRC 16432 / NCIMB 13614 / HKI 0122) protein is Methionine--tRNA ligase.